Consider the following 238-residue polypeptide: Cysteine-rich venom protein pseudechetoxin-like (238 aa).

The N-terminal stretch at 1–19 (MIAFTVLLSLAAVLQQSSG) is a signal peptide. The propeptide occupies 20–28 (TVDFASESS). The region spanning 38–164 (VDKHNDLRRS…STKYLYVCQY (127 aa)) is the SCP domain. Cystine bridges form between Cys75/Cys153, Cys92/Cys165, Cys148/Cys162, Cys184/Cys191, Cys187/Cys196, Cys200/Cys233, Cys209/Cys227, and Cys218/Cys231. A ShKT domain is found at 200 to 233 (CKHNNDFSNCKALAKKSKCQTEWIKSKCPATCFC).

The protein belongs to the CRISP family. In terms of tissue distribution, expressed by the venom gland.

Its subcellular location is the secreted. Its function is as follows. Blocks olfactory (CNGA2) and retinal (CNGA1) CNG channel currents. Does not affect neither depolarization- nor caffeine-induced contraction of smooth muscle. The polypeptide is Cysteine-rich venom protein pseudechetoxin-like (Oxyuranus scutellatus scutellatus (Australian taipan)).